Here is a 65-residue protein sequence, read N- to C-terminus: UPF0434 protein HS_0657 (65 aa).

This sequence belongs to the UPF0434 family.

The chain is UPF0434 protein HS_0657 from Histophilus somni (strain 129Pt) (Haemophilus somnus).